The primary structure comprises 134 residues: Cytochrome b5 (134 aa).

Alanine 2 bears the N-acetylalanine mark. 3 positions are modified to N6-acetyllysine: lysine 7, lysine 10, and lysine 19. The Cytochrome b5 heme-binding domain maps to 9–85 (VKYYTLEEIQ…SKTFIIGELH (77 aa)). 2 residues coordinate heme: histidine 44 and histidine 68. The helical transmembrane segment at 109–131 (WWTNWLIPAISALFVALIYHLYT) threads the bilayer.

The protein belongs to the cytochrome b5 family.

Its subcellular location is the endoplasmic reticulum membrane. It localises to the microsome membrane. In terms of biological role, cytochrome b5 is a membrane-bound hemoprotein functioning as an electron carrier for several membrane-bound oxygenases. The sequence is that of Cytochrome b5 (CYB5A) from Bos taurus (Bovine).